Consider the following 194-residue polypeptide: Crossover junction endodeoxyribonuclease RuvC (194 aa).

Catalysis depends on residues Asp-8, Glu-72, and Asp-144. Mg(2+)-binding residues include Asp-8, Glu-72, and Asp-144.

It belongs to the RuvC family. Homodimer which binds Holliday junction (HJ) DNA. The HJ becomes 2-fold symmetrical on binding to RuvC with unstacked arms; it has a different conformation from HJ DNA in complex with RuvA. In the full resolvosome a probable DNA-RuvA(4)-RuvB(12)-RuvC(2) complex forms which resolves the HJ. Mg(2+) serves as cofactor.

It localises to the cytoplasm. The catalysed reaction is Endonucleolytic cleavage at a junction such as a reciprocal single-stranded crossover between two homologous DNA duplexes (Holliday junction).. Functionally, the RuvA-RuvB-RuvC complex processes Holliday junction (HJ) DNA during genetic recombination and DNA repair. Endonuclease that resolves HJ intermediates. Cleaves cruciform DNA by making single-stranded nicks across the HJ at symmetrical positions within the homologous arms, yielding a 5'-phosphate and a 3'-hydroxyl group; requires a central core of homology in the junction. The consensus cleavage sequence is 5'-(A/T)TT(C/G)-3'. Cleavage occurs on the 3'-side of the TT dinucleotide at the point of strand exchange. HJ branch migration catalyzed by RuvA-RuvB allows RuvC to scan DNA until it finds its consensus sequence, where it cleaves and resolves the cruciform DNA. The protein is Crossover junction endodeoxyribonuclease RuvC of Psychrobacter arcticus (strain DSM 17307 / VKM B-2377 / 273-4).